Here is a 232-residue protein sequence, read N- to C-terminus: Lipid A 1-phosphatase (232 aa).

6 helical membrane-spanning segments follow: residues 10–30 (LFIT…PVGA), 42–62 (ELLT…LLFF), 80–100 (ALYV…SGLL), 136–156 (FPSG…LLFP), 160–180 (VAFI…GAHY), and 183–203 (DVIA…IVYA).

Belongs to the lipid A LpxE 1-phosphatase family.

Its subcellular location is the cell inner membrane. Its pathway is bacterial outer membrane biogenesis; LPS lipid A biosynthesis. Probably removes the 1-phosphate moiety from lipid A species. Does not seem to act on other membrane components, nor does it dephosphorylate the 4'-phosphate group of lipid A and/or lipid A precursors. The protein is Lipid A 1-phosphatase of Rhizobium etli (strain ATCC 51251 / DSM 11541 / JCM 21823 / NBRC 15573 / CFN 42).